Here is a 296-residue protein sequence, read N- to C-terminus: ATP phosphoribosyltransferase (296 aa).

It belongs to the ATP phosphoribosyltransferase family. Long subfamily. The cofactor is Mg(2+).

The protein localises to the cytoplasm. The catalysed reaction is 1-(5-phospho-beta-D-ribosyl)-ATP + diphosphate = 5-phospho-alpha-D-ribose 1-diphosphate + ATP. The protein operates within amino-acid biosynthesis; L-histidine biosynthesis; L-histidine from 5-phospho-alpha-D-ribose 1-diphosphate: step 1/9. Its activity is regulated as follows. Feedback inhibited by histidine. In terms of biological role, catalyzes the condensation of ATP and 5-phosphoribose 1-diphosphate to form N'-(5'-phosphoribosyl)-ATP (PR-ATP). Has a crucial role in the pathway because the rate of histidine biosynthesis seems to be controlled primarily by regulation of HisG enzymatic activity. The chain is ATP phosphoribosyltransferase from Halorubrum lacusprofundi (strain ATCC 49239 / DSM 5036 / JCM 8891 / ACAM 34).